A 175-amino-acid polypeptide reads, in one-letter code: Inner membrane protein p54 (175 aa).

Residues 32–52 (CTILVAIVVLIIIIIVLIYLF) form a helical membrane-spanning segment. Polar residues predominate over residues 79-89 (QWAGATPQPGT). The interval 79–121 (QWAGATPQPGTSKPAGATTGNVGKPITDRPATDRPVTNNPVTD) is disordered. Positions 141–153 (YTTATTQNTASQT) are interaction with host DYNLL1.

The protein belongs to the asfivirus envelope protein p54 family. As to quaternary structure, interacts with the host light chain cytoplasmic dynein DYNLL1; this interaction is critical for intracellular microtubule-dependent virus transport toward viral factories.

The protein resides in the virion membrane. The protein localises to the host cytoplasm. It is found in the host cytoskeleton. It localises to the host endoplasmic reticulum membrane. In terms of biological role, inner envelope protein involved, through its interaction with host dynein, in the intracellular microtubule-dependent transport of viral capsid toward viral factories. Seems to induce caspase-3 activation and apoptosis. Plays a role in virion morphogenesis by recruiting and transforming the host ER membranes into the precursors of the viral envelope. Involved in virus attachment to the host cell. The protein is Inner membrane protein p54 of African swine fever virus (isolate Pig/Kenya/KEN-50/1950) (ASFV).